The chain runs to 197 residues: Imidazoleglycerol-phosphate dehydratase (197 aa).

Belongs to the imidazoleglycerol-phosphate dehydratase family.

It localises to the cytoplasm. The catalysed reaction is D-erythro-1-(imidazol-4-yl)glycerol 3-phosphate = 3-(imidazol-4-yl)-2-oxopropyl phosphate + H2O. The protein operates within amino-acid biosynthesis; L-histidine biosynthesis; L-histidine from 5-phospho-alpha-D-ribose 1-diphosphate: step 6/9. This is Imidazoleglycerol-phosphate dehydratase from Chromohalobacter salexigens (strain ATCC BAA-138 / DSM 3043 / CIP 106854 / NCIMB 13768 / 1H11).